A 139-amino-acid polypeptide reads, in one-letter code: GSK3B-interacting protein (139 aa).

Residues Val-41–Leu-45 are required for PRKAR2A interaction; contributes to a protective effect against H(2)O(2)-induced apoptosis. The tract at residues Ser-115–Ser-139 is interaction with GSK3B and acts as a GSK3B inhibitor.

The protein belongs to the GSKIP family. As to quaternary structure, forms a complex composed of PRKAR2A or PRKAR2B, GSK3B and GSKIP through GSKIP interaction; facilitates PKA-induced phosphorylation of GSK3B leading to GSK3B inactivation; recruits DNM1L through GSK3B for PKA-mediated phosphorylation of DNM1L; promotes beta-catenin degradation through GSK3B-induced phosphorylation of beta-catenin; stabilizes beta-catenin and enhances Wnt-induced signaling through PKA-induced phosphorylation of beta-catenin. Interacts with GSK3B; induces GSK3B-mediated phosphorylation of GSKIP and inhibits GSK3B kinase activity. Phosphorylated by GSK3B.

The protein resides in the cytoplasm. The protein localises to the nucleus. Functionally, A-kinase anchoring protein for GSK3B and PKA that regulates or facilitates their kinase activity towards their targets. The ternary complex enhances Wnt-induced signaling by facilitating the GSK3B- and PKA-induced phosphorylation of beta-catenin leading to beta-catenin degradation and stabilization respectively. Upon cAMP activation, the ternary complex contributes to neuroprotection against oxidative stress-induced apoptosis by facilitating the PKA-induced phosphorylation of DML1 and PKA-induced inactivation of GSK3B. During neurite outgrowth promotes neuron proliferation; while increases beta-catenin-induced transcriptional activity through GSK3B kinase activity inhibition, reduces N-cadherin level to promote cell cycle progression. May play a role in cleft palate formation and is required for postnatal life through modulation of the activity of GSK3B during development. This Bos taurus (Bovine) protein is GSK3B-interacting protein.